The following is a 366-amino-acid chain: Mannonate dehydratase (366 aa).

It belongs to the mannonate dehydratase family. It depends on Fe(2+) as a cofactor. Mn(2+) is required as a cofactor.

It carries out the reaction D-mannonate = 2-dehydro-3-deoxy-D-gluconate + H2O. It functions in the pathway carbohydrate metabolism; pentose and glucuronate interconversion. Its function is as follows. Catalyzes the dehydration of D-mannonate. In Streptococcus pneumoniae (strain 70585), this protein is Mannonate dehydratase.